The chain runs to 514 residues: Folylpolyglutamate synthase (514 aa).

G82–S85 provides a ligand contact to ATP. Positions 107, 186, and 214 each coordinate Mg(2+). ATP is bound by residues R339 and D355.

This sequence belongs to the folylpolyglutamate synthase family. It depends on a monovalent cation as a cofactor.

The protein localises to the mitochondrion inner membrane. Its subcellular location is the mitochondrion matrix. It localises to the cytoplasm. It carries out the reaction (6S)-5,6,7,8-tetrahydrofolyl-(gamma-L-Glu)(n) + L-glutamate + ATP = (6S)-5,6,7,8-tetrahydrofolyl-(gamma-L-Glu)(n+1) + ADP + phosphate + H(+). It functions in the pathway cofactor biosynthesis; tetrahydrofolylpolyglutamate biosynthesis. Catalyzes conversion of folates to polyglutamate derivatives allowing concentration of folate compounds in the cell and the intracellular retention of these cofactors, which are important substrates for most of the folate-dependent enzymes that are involved in one-carbon transfer reactions involved in purine, pyrimidine and amino acid synthesis. This chain is Folylpolyglutamate synthase (MET7), found in Candida albicans (Yeast).